Here is a 226-residue protein sequence, read N- to C-terminus: Ribonuclease 3 (226 aa).

The region spanning 6–128 is the RNase III domain; sequence ANKIQQILGY…LIGSIYLDSN (123 aa). Glutamate 41 contacts Mg(2+). Aspartate 45 is a catalytic residue. The Mg(2+) site is built by asparagine 114 and glutamate 117. Glutamate 117 is a catalytic residue. Positions 155–225 constitute a DRBM domain; the sequence is DPKTRLQEYL…ARKALIKLGV (71 aa).

This sequence belongs to the ribonuclease III family. Homodimer. Mg(2+) is required as a cofactor.

The protein resides in the cytoplasm. The enzyme catalyses Endonucleolytic cleavage to 5'-phosphomonoester.. Its function is as follows. Digests double-stranded RNA. Involved in the processing of primary rRNA transcript to yield the immediate precursors to the large and small rRNAs (23S and 16S). Processes some mRNAs, and tRNAs when they are encoded in the rRNA operon. Processes pre-crRNA and tracrRNA of type II CRISPR loci if present in the organism. The polypeptide is Ribonuclease 3 (Buchnera aphidicola subsp. Schizaphis graminum (strain Sg)).